The chain runs to 328 residues: Lipoyl synthase (328 aa).

Positions 56, 61, 67, 82, 86, 89, and 298 each coordinate [4Fe-4S] cluster. A Radical SAM core domain is found at 68-287; the sequence is WEDREATFLI…KEEAEEIGFS (220 aa).

Belongs to the radical SAM superfamily. Lipoyl synthase family. [4Fe-4S] cluster serves as cofactor.

Its subcellular location is the cytoplasm. It carries out the reaction [[Fe-S] cluster scaffold protein carrying a second [4Fe-4S](2+) cluster] + N(6)-octanoyl-L-lysyl-[protein] + 2 oxidized [2Fe-2S]-[ferredoxin] + 2 S-adenosyl-L-methionine + 4 H(+) = [[Fe-S] cluster scaffold protein] + N(6)-[(R)-dihydrolipoyl]-L-lysyl-[protein] + 4 Fe(3+) + 2 hydrogen sulfide + 2 5'-deoxyadenosine + 2 L-methionine + 2 reduced [2Fe-2S]-[ferredoxin]. It participates in protein modification; protein lipoylation via endogenous pathway; protein N(6)-(lipoyl)lysine from octanoyl-[acyl-carrier-protein]: step 2/2. In terms of biological role, catalyzes the radical-mediated insertion of two sulfur atoms into the C-6 and C-8 positions of the octanoyl moiety bound to the lipoyl domains of lipoate-dependent enzymes, thereby converting the octanoylated domains into lipoylated derivatives. The chain is Lipoyl synthase from Streptomyces avermitilis (strain ATCC 31267 / DSM 46492 / JCM 5070 / NBRC 14893 / NCIMB 12804 / NRRL 8165 / MA-4680).